A 353-amino-acid polypeptide reads, in one-letter code: Phosphate acyltransferase (353 aa).

This sequence belongs to the PlsX family. As to quaternary structure, homodimer. Probably interacts with PlsY.

The protein resides in the cytoplasm. The catalysed reaction is a fatty acyl-[ACP] + phosphate = an acyl phosphate + holo-[ACP]. Its pathway is lipid metabolism; phospholipid metabolism. Catalyzes the reversible formation of acyl-phosphate (acyl-PO(4)) from acyl-[acyl-carrier-protein] (acyl-ACP). This enzyme utilizes acyl-ACP as fatty acyl donor, but not acyl-CoA. This chain is Phosphate acyltransferase, found in Rhodopseudomonas palustris (strain ATCC BAA-98 / CGA009).